A 523-amino-acid chain; its full sequence is Putative pentatricopeptide repeat-containing protein At3g15200 (523 aa).

PPR repeat units follow at residues 142–172 (SSML…MSKR), 177–211 (NEKT…GIDD), 212–242 (DLVA…RRRE), 246–280 (DIKA…KCRP), 281–315 (DVVS…RRNP), 316–350 (DVKI…GPDP), 351–385 (NVVT…GGSC), 388–418 (NDVT…NKCE), 420–454 (TSDL…GLGP), and 455–489 (DQRT…GMVP). The disordered stretch occupies residues 497–523 (LNQNKTKPRVEDKMLRSNLTSEESESD).

It belongs to the PPR family. P subfamily.

The protein is Putative pentatricopeptide repeat-containing protein At3g15200 of Arabidopsis thaliana (Mouse-ear cress).